We begin with the raw amino-acid sequence, 70 residues long: Putative membrane protein insertion efficiency factor (70 aa).

Belongs to the UPF0161 family.

The protein resides in the cell inner membrane. Could be involved in insertion of integral membrane proteins into the membrane. The chain is Putative membrane protein insertion efficiency factor from Desulforapulum autotrophicum (strain ATCC 43914 / DSM 3382 / VKM B-1955 / HRM2) (Desulfobacterium autotrophicum).